The chain runs to 481 residues: Glutamate--glyoxylate aminotransferase 1 (481 aa).

At Lys-291 the chain carries N6-(pyridoxal phosphate)lysine. A Peroxisomal targeting signal motif is present at residues 479 to 481; that stretch reads SKM.

Belongs to the class-I pyridoxal-phosphate-dependent aminotransferase family. Alanine aminotransferase subfamily. In terms of assembly, homodimer. Pyridoxal 5'-phosphate serves as cofactor. Post-translationally, the N-terminus is blocked. Mostly expressed in leaves, and, to a lower extent, in shoots, stems, flowers, seedlings and green siliques.

Its subcellular location is the peroxisome. The enzyme catalyses L-alanine + 2-oxoglutarate = pyruvate + L-glutamate. It catalyses the reaction glyoxylate + L-alanine = glycine + pyruvate. The catalysed reaction is glycine + 2-oxoglutarate = glyoxylate + L-glutamate. Its pathway is amino-acid biosynthesis; glycine biosynthesis; glycine from glyoxylate: step 1/1. It functions in the pathway photosynthesis; C4 acid pathway. It participates in amino-acid degradation; L-alanine degradation via transaminase pathway; pyruvate from L-alanine: step 1/1. Functionally, catalyzes the glutamate:glyoxylate (GGT or GGAT), alanine:glyoxylate (AGT), alanine:2-oxoglutarate (AKT) and glutamate:pyruvate (GPT) aminotransferase reactions in peroxisomes. Required for abscisic acid (ABA)- and stress-mediated responses in an H(2)O(2)-dependent manner. Functions as a photorespiratory aminotransferase that modulates amino acid content during photorespiration (GGAT activity); promotes serine, glycine and citrulline metabolism in response to light. The protein is Glutamate--glyoxylate aminotransferase 1 (GGAT1) of Arabidopsis thaliana (Mouse-ear cress).